The chain runs to 315 residues: Calcium homeostasis modulator protein 4 (315 aa).

Over 1 to 14 the chain is Cytoplasmic; it reads MSPDLNCISSSLLR. The helical transmembrane segment at 15 to 37 threads the bilayer; the sequence is SEPCINSLIAILTVCGQQLFSSY. Over 38-48 the chain is Extracellular; sequence TFSCPCQVGKN. 2 disulfide bridges follow: Cys-41-Cys-132 and Cys-43-Cys-163. A helical transmembrane segment spans residues 49-71; the sequence is FYYGSAFLVVPALILLIAGYALR. At 72-104 the chain is on the cytoplasmic side; that stretch reads GQMWTVASEYCCCSCTPPYRRSSPLERRLACLM. A helical transmembrane segment spans residues 105 to 130; the sequence is FFDITGRALVAPLTWLTVTLLTGTYY. The Extracellular portion of the chain corresponds to 131–184; it reads ECAASEFASVDQYPMFANVTPSKREEMLAGFPCYTSAPSDVIPIRDEVALLHRY. A helical membrane pass occupies residues 185–208; it reads QSQMLGWILVVLATIALLLSKCLA. The Cytoplasmic segment spans residues 209–315; it reads RCCSPLTSLQ…DRQEGIEMKP (107 aa).

The protein belongs to the CALHM family. As to quaternary structure, oligomerizes to form decameric and undecameric channels. Two hemichannels can assemble in a tail-to-tail manner to form a gap junction.

The protein localises to the cell membrane. In terms of biological role, may assemble to form gap junction channel-like structures involved in intercellular communication. Channel gating and ion conductance are likely regulated by membrane lipids rather than by membrane depolarization or extracellular calcium levels. This chain is Calcium homeostasis modulator protein 4, found in Mus musculus (Mouse).